The primary structure comprises 459 residues: Exodeoxyribonuclease 7 large subunit (459 aa).

It belongs to the XseA family. Heterooligomer composed of large and small subunits.

The protein localises to the cytoplasm. It catalyses the reaction Exonucleolytic cleavage in either 5'- to 3'- or 3'- to 5'-direction to yield nucleoside 5'-phosphates.. In terms of biological role, bidirectionally degrades single-stranded DNA into large acid-insoluble oligonucleotides, which are then degraded further into small acid-soluble oligonucleotides. The polypeptide is Exodeoxyribonuclease 7 large subunit (Pseudomonas putida (strain ATCC 47054 / DSM 6125 / CFBP 8728 / NCIMB 11950 / KT2440)).